We begin with the raw amino-acid sequence, 387 residues long: MNPDNPLLALRDKISAVDKKLLTLLAERRLLAVEVAQAKLATHRPIRDVERERALLENLIVLGKAHNLDAHYITRLFQLVIEDSVLTQQALLQKNLNHPHAHAARIAFLGPKGSYSHLAARNYASRHFDSMVECGCLKFHDIIKQVENGVADYAVMPIENTSSGSINDVYDLLQQTSLSIVGELTLPIDHCVLVNGPTDLQQIETVYSHPQPFQQCSQFINRFPHWKIEYTESTAAAMEKVAALNSPKVAALGSEAGGELYQLQVLERNLANQQQNHTRFIVLARKAIEVSDQVPAKTTLIMATGQQAGALVDALLVLRQHNLIMSKLESRPINGNPWEEMFYIDVQGNLQSERMQQALQELQTMTRSLKVLGCYPSENVVPAEPGR.

The region spanning 1–92 (MNPDNPLLAL…DSVLTQQALL (92 aa)) is the Chorismate mutase domain. Residues Arg11, Arg28, Lys39, Asp48, Glu52, Ser84, and Gln88 each coordinate substrate. The Prephenate dehydratase domain maps to 105-285 (RIAFLGPKGS…NHTRFIVLAR (181 aa)). The 78-residue stretch at 299–376 (TLIMATGQQA…RSLKVLGCYP (78 aa)) folds into the ACT domain.

It localises to the cytoplasm. The enzyme catalyses chorismate = prephenate. It carries out the reaction prephenate + H(+) = 3-phenylpyruvate + CO2 + H2O. It participates in amino-acid biosynthesis; L-phenylalanine biosynthesis; phenylpyruvate from prephenate: step 1/1. Its pathway is metabolic intermediate biosynthesis; prephenate biosynthesis; prephenate from chorismate: step 1/1. Functionally, catalyzes the Claisen rearrangement of chorismate to prephenate and the decarboxylation/dehydration of prephenate to phenylpyruvate. The polypeptide is Bifunctional chorismate mutase/prephenate dehydratase (pheA) (Enterobacter agglomerans (Erwinia herbicola)).